We begin with the raw amino-acid sequence, 411 residues long: AT-hook motif nuclear-localized protein 14 (411 aa).

Disordered regions lie at residues methionine 1–threonine 32, alanine 54–valine 164, lysine 289–glycine 348, and threonine 366–aspartate 411. Residues histidine 7 to histidine 19 are compositionally biased toward basic residues. Residues glutamine 20–glutamine 29 are compositionally biased toward low complexity. Residues alanine 54 to glycine 66 are compositionally biased toward polar residues. Positions lysine 105 to lysine 113 match the Bipartite nuclear localization signal motif. Residues lysine 105 to proline 117 constitute a DNA-binding region (a.T hook). 2 stretches are compositionally biased toward low complexity: residues alanine 120–alanine 135 and valine 144–serine 159. One can recognise a PPC domain in the interval glycine 165–serine 305. The segment covering arginine 306–glutamine 315 has biased composition (polar residues). Over residues arginine 374–aspartate 390 the composition is skewed to gly residues.

The protein resides in the nucleus. Transcription factor that specifically binds AT-rich DNA sequences related to the nuclear matrix attachment regions (MARs). This chain is AT-hook motif nuclear-localized protein 14, found in Arabidopsis thaliana (Mouse-ear cress).